Consider the following 147-residue polypeptide: Large ribosomal subunit protein uL22c (147 aa).

The protein belongs to the universal ribosomal protein uL22 family. In terms of assembly, part of the 50S ribosomal subunit.

It is found in the plastid. Its function is as follows. This protein binds specifically to 23S rRNA. Functionally, the globular domain of the protein is located near the polypeptide exit tunnel on the outside of the subunit, while an extended beta-hairpin is found that lines the wall of the exit tunnel in the center of the 70S ribosome. The protein is Large ribosomal subunit protein uL22c (rpl22) of Cuscuta gronovii (Common dodder).